A 56-amino-acid polypeptide reads, in one-letter code: Chymotrypsin inhibitor (56 aa).

5 cysteine pairs are disulfide-bonded: C3/C36, C12/C32, C16/C28, C20/C56, and C38/C50. Residues 3-56 form the TIL domain; that stretch reads CGPNEVFNTCGSACAPTCAQPKTRICTMQCRIGCQCQEGFLRNGEGACVLPENC.

It belongs to the serine protease inhibitor-like (TIL domain-containing) family.

The protein localises to the secreted. Functionally, chymotrypsin and cathepsin G inhibitor. The protein is Chymotrypsin inhibitor of Apis mellifera (Honeybee).